Here is a 375-residue protein sequence, read N- to C-terminus: Succinyl-diaminopimelate desuccinylase (375 aa).

Residue His66 coordinates Zn(2+). Asp68 is a catalytic residue. Asp99 contributes to the Zn(2+) binding site. The active-site Proton acceptor is the Glu133. Positions 134, 162, and 348 each coordinate Zn(2+).

It belongs to the peptidase M20A family. DapE subfamily. Homodimer. The cofactor is Zn(2+). Co(2+) serves as cofactor.

The catalysed reaction is N-succinyl-(2S,6S)-2,6-diaminopimelate + H2O = (2S,6S)-2,6-diaminopimelate + succinate. It participates in amino-acid biosynthesis; L-lysine biosynthesis via DAP pathway; LL-2,6-diaminopimelate from (S)-tetrahydrodipicolinate (succinylase route): step 3/3. In terms of biological role, catalyzes the hydrolysis of N-succinyl-L,L-diaminopimelic acid (SDAP), forming succinate and LL-2,6-diaminopimelate (DAP), an intermediate involved in the bacterial biosynthesis of lysine and meso-diaminopimelic acid, an essential component of bacterial cell walls. This is Succinyl-diaminopimelate desuccinylase from Shigella flexneri serotype 5b (strain 8401).